Here is a 592-residue protein sequence, read N- to C-terminus: Insulin-like growth factor 2 mRNA-binding protein 2 (592 aa).

2 consecutive RRM domains span residues 3-76 (NKLY…YSVS) and 82-157 (RRIQ…YIPD). The residue at position 11 (Ser-11) is a Phosphoserine. Positions 157-182 (DEEVSSPSPPHRAREQGHGPGSSSQA) are disordered. A phosphoserine mark is found at Ser-162 and Ser-164. 4 consecutive KH domains span residues 186-251 (DFPL…CRMI), 267-334 (EVPL…EIEI), 420-485 (QETV…QGRI), and 502-568 (KLEA…QRKI). Thr-543 carries the phosphothreonine modification.

It belongs to the RRM IMP/VICKZ family. In terms of assembly, can form homooligomers and heterooligomers with IGF2BP1 and IGF2BP3 in an RNA-dependent manner. Interacts with HNRPD. Interacts with IGF2BP1. Interacts with ELAVL1, DHX9, HNRNPU, MATR3 and PABPC1. As to expression, expressed in oocytes, granulosa cells of small and growing follicles and Leydig cells of the testis (at protein level). Expressed in testis and ovary.

It is found in the nucleus. The protein resides in the cytoplasm. The protein localises to the P-body. It localises to the stress granule. In terms of biological role, RNA-binding factor that recruits target transcripts to cytoplasmic protein-RNA complexes (mRNPs). This transcript 'caging' into mRNPs allows mRNA transport and transient storage. It also modulates the rate and location at which target transcripts encounter the translational apparatus and shields them from endonuclease attacks or microRNA-mediated degradation. Preferentially binds to N6-methyladenosine (m6A)-containing mRNAs and increases their stability. Binds to the 5'-UTR of the insulin-like growth factor 2 (IGF2) mRNAs. Binding is isoform-specific. Binds to beta-actin/ACTB and MYC transcripts. Increases MYC mRNA stability by binding to the coding region instability determinant (CRD) and binding is enhanced by m6A-modification of the CRD. This is Insulin-like growth factor 2 mRNA-binding protein 2 (Igf2bp2) from Mus musculus (Mouse).